The following is a 1348-amino-acid chain: Adhesion G protein-coupled receptor F5 (1348 aa).

The first 21 residues, Met-1–Ala-21, serve as a signal peptide directing secretion. Topologically, residues Ala-22–Tyr-1019 are extracellular. The 109-residue stretch at Pro-163 to Glu-271 folds into the SEA domain. Ig-like domains follow at residues Pro-268–Thr-366, Pro-367–Thr-464, and Ala-469–Thr-559. Asn-270, Asn-286, Asn-337, and Asn-349 each carry an N-linked (GlcNAc...) asparagine glycan. Cys-291 and Cys-348 are oxidised to a cystine. Cys-389 and Cys-447 are joined by a disulfide. N-linked (GlcNAc...) asparagine glycosylation is found at Asn-470, Asn-538, and Asn-665. Cys-490 and Cys-543 are oxidised to a cystine. Ser-818 is modified (phosphoserine). A GAIN-B domain is found at Thr-841 to Asp-1005. Disulfide bonds link Cys-953–Cys-987 and Cys-972–Cys-989. The interval Cys-953–Asp-1005 is GPS. Positions Thr-993 to Ser-1008 are tethered agonist. A helical membrane pass occupies residues Ile-1020–Trp-1040. At Lys-1041 to Cys-1055 the chain is on the cytoplasmic side. Residues Ile-1056–Ile-1076 traverse the membrane as a helical segment. Over His-1077 to Thr-1092 the chain is Extracellular. The helical transmembrane segment at Phe-1093–Leu-1113 threads the bilayer. Residues Phe-1114–Lys-1130 are Cytoplasmic-facing. A helical membrane pass occupies residues Ala-1131–Val-1151. The Extracellular segment spans residues Thr-1152–Leu-1175. Residues Ala-1176–Ile-1196 form a helical membrane-spanning segment. Residues Thr-1197 to Lys-1221 are Cytoplasmic-facing. Residues Ser-1222–Ile-1242 form a helical membrane-spanning segment. The Extracellular portion of the chain corresponds to Gln-1243–His-1250. The helical transmembrane segment at Ile-1251 to Trp-1271 threads the bilayer. Over Asp-1272–Asn-1348 the chain is Cytoplasmic. Residue Thr-1302 is modified to Phosphothreonine. Position 1309 is a phosphoserine (Ser-1309). The segment at Ser-1328–Asn-1348 is disordered.

This sequence belongs to the G-protein coupled receptor 2 family. Adhesion G-protein coupled receptor (ADGR) subfamily. In terms of assembly, homodimer; disulfide-linked. Heterodimer of 2 chains generated by proteolytic processing; the large extracellular N-terminal fragment and the membrane-bound C-terminal fragment predominantly remain associated and non-covalently linked. Fragment generates by the processing enzyme furin remains attached to the extracellular N-terminal fragment. Interacts (via N-terminal extracellular domain) with SFTPD. Highly glycosylated. In terms of processing, proteolytically cleaved at multiple sites: one in the GPS region of the GAIN-B domain (S1 site) and the other in the SEA domain (S2 site). The proteolytic cleavage at S1 site generates an extracellular subunit and a seven-transmembrane subunit. The proteolytic cleavage at S2 site generates a fragment that undergoes proteolytic cleavage by the processing enzyme furin. Widely expressed, with highest levels in lung, pancreas, kidney and heart. In the kidney, expressed more abundantly in the medulla than in the cortex, predominantly expressed in A-intercalated cells (at protein level). Expressed in endothelial cells from various tissues, including brain, heart, kidney, liver, lung and muscle. In the lung, expressed in alveolar type II (ATII) cells (at protein level). Expressed in pancreatic islets of Langerhans, predominantly in delta cells, as well as in endothelial cells. Expressed in white adipose tissue.

The protein resides in the cell membrane. With respect to regulation, as an adhesion G protein-coupled receptor (aGPCR) exhibits a large N-terminal extracellular domain containing highly conserved GPCR autoproteolysis-inducing (GAIN) domain. During synthesis, intracellular autoproteolytic processing of nascent chain within the GAIN domain generates a mature protein, consisting of an N-terminal fragment that is non-covalently linked to the C-terminal fragment. The mature protein is routed to the plasma membrane where the N- and C-terminal fragments remain associated, forming the holoreceptor. Dissociation of the aGPCR fragments stimulates G protein signaling through the action of the tethered-peptide agonist stalk that is occluded within the GAIN domain in the holoreceptor form. This dissociation might be induced by ligand binding, such as that of sFNDC4. In terms of biological role, adhesion G protein-coupled receptor. In alveolar type II (ATII or AT2) cells, required for normal lung surfactant homeostasis. Modulation of both surfactant secretion and uptake by ATII cells is mediated by the downstream activation of GNAQ/GNA11 proteins and may be a consequence of increased cortical F-actin assembly induced by ADGRF5 activation. In the kidney, may play a role in the regulation of acid excretion into the primary urine, possibly by regulating the surface expression of V-ATPase proton pump. As a receptor for soluble FNDC4 (sFNDC4), required for proper systemic glucose tolerance, specifically sensitizing white adipose tissue to insulin. Also plays a role in sFNDC4-induced decrease of local inflammation in white adipose tissue. This is Adhesion G protein-coupled receptor F5 (Adgrf5) from Mus musculus (Mouse).